Reading from the N-terminus, the 137-residue chain is Basic phospholipase A2 DsM-S1 (137 aa).

The first 16 residues, 1–16, serve as a signal peptide directing secretion; that stretch reads MRTLWIVAVCLIGVEG. Disulfide bonds link C42/C131, C44/C60, C59/C111, C65/C137, C66/C104, C73/C97, and C91/C102. Residues Y43, G45, and G47 each coordinate Ca(2+). The active site involves H63. A Ca(2+)-binding site is contributed by D64. D105 is a catalytic residue.

Belongs to the phospholipase A2 family. Group II subfamily. D49 sub-subfamily. The cofactor is Ca(2+). Expressed by the venom gland.

The protein localises to the secreted. The catalysed reaction is a 1,2-diacyl-sn-glycero-3-phosphocholine + H2O = a 1-acyl-sn-glycero-3-phosphocholine + a fatty acid + H(+). In terms of biological role, snake venom phospholipase A2 (PLA2) that is neurotoxic. PLA2 catalyzes the calcium-dependent hydrolysis of the 2-acyl groups in 3-sn-phosphoglycerides. This chain is Basic phospholipase A2 DsM-S1, found in Daboia siamensis (Eastern Russel's viper).